The primary structure comprises 193 residues: uncharacterized protein (193 aa).

4 consecutive transmembrane segments (helical) span residues 40 to 56, 63 to 79, 86 to 110, and 117 to 138; these read LYIA…LKLI, AAGL…SSLC, CSGY…IVSC, and FIFP…FQIY. Residues 158 to 193 are disordered; that stretch reads TTTKLSRSSSAPDLSCPSLSTQPTSPNQSLSAYKKY.

This sequence belongs to the chlamydial CPn_0442/CT_006/TC_0274 family.

It is found in the cell membrane. This is an uncharacterized protein from Chlamydia muridarum (strain MoPn / Nigg).